The primary structure comprises 408 residues: Neutral cholesterol ester hydrolase 1 (408 aa).

The Cytoplasmic segment spans residues 1–4 (MRSS). Residues 5–25 (CVLLAALLALVAYYVYIPLPS) form a helical; Signal-anchor for type II membrane protein membrane-spanning segment. Over 26–408 (AVSDPWKLML…SYFKWLDQNL (383 aa)) the chain is Lumenal. The Involved in the stabilization of the negatively charged intermediate by the formation of the oxyanion hole signature appears at 113–115 (HGG). S191 is a catalytic residue. N270 carries an N-linked (GlcNAc...) asparagine glycan. D348 is an active-site residue. N367 carries an N-linked (GlcNAc...) asparagine glycan. Residue H378 is part of the active site. Residue N389 is glycosylated (N-linked (GlcNAc...) asparagine).

It belongs to the 'GDXG' lipolytic enzyme family. N-glycosylated.

The protein resides in the cell membrane. Its subcellular location is the microsome. The catalysed reaction is a 1-O-alkyl-2-acetyl-sn-glycerol + H2O = a 1-O-alkyl-sn-glycerol + acetate + H(+). It catalyses the reaction 1-O-hexadecyl-2-acetyl-sn-glycerol + H2O = 1-O-hexadecyl-sn-glycerol + acetate + H(+). It carries out the reaction a cholesterol ester + H2O = cholesterol + a fatty acid + H(+). The enzyme catalyses cholesteryl (9Z-octadecenoate) + H2O = cholesterol + (9Z)-octadecenoate + H(+). In terms of biological role, hydrolyzes 2-acetyl monoalkylglycerol ether (1-O-alkyl-2-acetyl-sn-glycerol), the penultimate precursor of the pathway for de novo synthesis of platelet-activating factor. May be responsible for the hydrolysis of cholesterol esters (such as cholesteryl (9Z-octadecenoate)) in macrophages. Also involved in organ detoxification by hydrolyzing exogenous organophosphorus compounds. The polypeptide is Neutral cholesterol ester hydrolase 1 (Nceh1) (Rattus norvegicus (Rat)).